The sequence spans 221 residues: Ependymin-2 (221 aa).

A signal peptide spans 1-21 (MQDFAFAALSIWLCLGATALA). Asn33, Asn73, and Asn97 each carry an N-linked (GlcNAc...) asparagine glycan.

This sequence belongs to the ependymin family. Binds calcium through the terminal sialic acids. As to expression, EPDs are synthesized in the meninx and secreted in the cerebrospinal fluid.

Its subcellular location is the secreted. May play a role in neural plasticity. May be involved during axon regeneration. The protein is Ependymin-2 (epd2) of Oncorhynchus mykiss (Rainbow trout).